The following is a 95-amino-acid chain: Costars family protein At4g33640 (95 aa).

The residue at position 1 (Met-1) is an N-acetylmethionine.

This sequence belongs to the costars family.

The chain is Costars family protein At4g33640 from Arabidopsis thaliana (Mouse-ear cress).